A 341-amino-acid chain; its full sequence is Methionine import ATP-binding protein MetN 1 (341 aa).

The ABC transporter domain maps to 2–241 (IEFRQVSKSF…PKTTIAQNFV (240 aa)). 38–45 (GYSGAGKS) provides a ligand contact to ATP.

The protein belongs to the ABC transporter superfamily. Methionine importer (TC 3.A.1.24) family. As to quaternary structure, the complex is composed of two ATP-binding proteins (MetN), two transmembrane proteins (MetI) and a solute-binding protein (MetQ).

The protein resides in the cell membrane. It carries out the reaction L-methionine(out) + ATP + H2O = L-methionine(in) + ADP + phosphate + H(+). The enzyme catalyses D-methionine(out) + ATP + H2O = D-methionine(in) + ADP + phosphate + H(+). Its function is as follows. Part of the ABC transporter complex MetNIQ involved in methionine import. Responsible for energy coupling to the transport system. In Staphylococcus aureus (strain MRSA252), this protein is Methionine import ATP-binding protein MetN 1.